The sequence spans 799 residues: Protein-lysine N-methyltransferase SMYD4 (799 aa).

S-adenosyl-L-methionine is bound at residue 112-114; that stretch reads RSA. The SET domain occupies 233-570; sequence LSVSLCTHPL…KGQEILHCYG (338 aa). The Zn(2+) site is built by Cys296, Cys299, Cys309, Cys312, Cys318, Cys322, His331, and Cys335. Residues 296-335 form an MYND-type zinc finger; the sequence is CHRCLKHTLATVPCGSCSYAKYCSQECMQQAWDLYHSTEC. S-adenosyl-L-methionine-binding positions include 535 to 536, Tyr569, and Phe591; that span reads NH.

It belongs to the class V-like SAM-binding methyltransferase superfamily. Interacts (via MYND-type zinc finger) with HDAC1.

It localises to the nucleus. It is found in the cytoplasm. The catalysed reaction is L-lysyl-[protein] + S-adenosyl-L-methionine = N(6)-methyl-L-lysyl-[protein] + S-adenosyl-L-homocysteine + H(+). Its function is as follows. Protein-lysine N-methyltransferase. Monomethylates PRMT5, modulating its transcriptional activity. May also act as a histone methyltransferase. Plays a critical role in cardiac development. Acts as a key epigenetic regulator of gene expression during cardiac development via its dual activities as a methyltransferase and negative regulator of HDAC1. This is Protein-lysine N-methyltransferase SMYD4 (Smyd4) from Mus musculus (Mouse).